We begin with the raw amino-acid sequence, 236 residues long: Small ribosomal subunit protein uS2c (236 aa).

Belongs to the universal ribosomal protein uS2 family.

The protein resides in the plastid. It is found in the chloroplast. In Lactuca sativa (Garden lettuce), this protein is Small ribosomal subunit protein uS2c (rps2).